Consider the following 236-residue polypeptide: Ubiquinone biosynthesis O-methyltransferase (236 aa).

S-adenosyl-L-methionine is bound by residues arginine 39, glycine 59, aspartate 80, and methionine 124.

This sequence belongs to the methyltransferase superfamily. UbiG/COQ3 family.

The enzyme catalyses a 3-demethylubiquinol + S-adenosyl-L-methionine = a ubiquinol + S-adenosyl-L-homocysteine + H(+). It carries out the reaction a 3-(all-trans-polyprenyl)benzene-1,2-diol + S-adenosyl-L-methionine = a 2-methoxy-6-(all-trans-polyprenyl)phenol + S-adenosyl-L-homocysteine + H(+). Its pathway is cofactor biosynthesis; ubiquinone biosynthesis. O-methyltransferase that catalyzes the 2 O-methylation steps in the ubiquinone biosynthetic pathway. The protein is Ubiquinone biosynthesis O-methyltransferase of Shewanella putrefaciens (strain CN-32 / ATCC BAA-453).